We begin with the raw amino-acid sequence, 221 residues long: MNNQIFESVDHYISDLLGYEDDALLAATNSLAEAGMPAISVSPNQGKFLQLLAQLCQAKNILELGTLAGYSTIWMARALPKNGRLITLEYDPKHAAVAQKNIDRAGLTSQVQIRTGKAIDILPQLVEEGAGPFDMIFIDADKPPYTEYFQWALRLSRPGTLIVADNVIRDGKVLDENSTEPAVQGARRFNAMLGANTAVDATILQMVGVKEYDGMALAIVK.

Val41, Gly65, Leu67, Ser71, Glu89, His94, Ala118, and Asp139 together coordinate S-adenosyl-L-methionine. Mg(2+) is bound by residues Asp139, Asp165, and Asn166.

This sequence belongs to the class I-like SAM-binding methyltransferase superfamily. Cation-dependent O-methyltransferase family. As to quaternary structure, homodimer. The cofactor is Mg(2+).

The catalysed reaction is a catechol + S-adenosyl-L-methionine = a guaiacol + S-adenosyl-L-homocysteine + H(+). With respect to regulation, the metal ion affects the meta and para-regiospecificity of the enzyme as well as the enzyme activity and thermal stability. Its function is as follows. Catechol O-methyltransferase that can use various catechol-like compounds. Can produce vanillic acid (meta-form) and iso-vanillic acid (para-form) from protocatechuic acid (PCA). Does not have a regiospecificity, and produces the meta- and para-forms of the products in equal proportion. This chain is Catechol O-methyltransferase, found in Niastella koreensis (strain DSM 17620 / KACC 11465 / NBRC 106392 / GR20-10).